A 226-amino-acid chain; its full sequence is Fibrillarin-like rRNA/tRNA 2'-O-methyltransferase (226 aa).

Residues 85–86 (TT), 104–105 (EF), 129–130 (DA), and 149–152 (DVAQ) contribute to the S-adenosyl-L-methionine site.

This sequence belongs to the methyltransferase superfamily. Fibrillarin family. As to quaternary structure, interacts with nop5. Component of box C/D small ribonucleoprotein (sRNP) particles that contain rpl7ae, FlpA and nop5, plus a guide RNA.

In terms of biological role, involved in pre-rRNA and tRNA processing. Utilizes the methyl donor S-adenosyl-L-methionine to catalyze the site-specific 2'-hydroxyl methylation of ribose moieties in rRNA and tRNA. Site specificity is provided by a guide RNA that base pairs with the substrate. Methylation occurs at a characteristic distance from the sequence involved in base pairing with the guide RNA. This Thermococcus onnurineus (strain NA1) protein is Fibrillarin-like rRNA/tRNA 2'-O-methyltransferase.